We begin with the raw amino-acid sequence, 118 residues long: Late cornified envelope protein 1E (118 aa).

Residues 1 to 10 show a composition bias toward low complexity; that stretch reads MSCQQSQQQC. Disordered stretches follow at residues 1–23 and 84–118; these read MSCQ…CPPK and RSHR…GGCC. The segment covering 11–23 has biased composition (pro residues); the sequence is QPPPKCTPKCPPK. Residues 92–103 are compositionally biased toward low complexity; that stretch reads SSDCCSQPSGGS. Gly residues predominate over residues 104 to 118; sequence SCCGGGSGQHSGGCC.

This sequence belongs to the LCE family. In terms of assembly, interacts with CYSRT1. As to expression, skin-specific. Expression was readily detected in adult trunk skin, adult arm skin, fetal skin, penal skin, vulva, esophagus and tongue. Not expressed in the cervix, rectum, lung, colon, or placenta.

Precursors of the cornified envelope of the stratum corneum. This chain is Late cornified envelope protein 1E (LCE1E), found in Homo sapiens (Human).